A 196-amino-acid polypeptide reads, in one-letter code: Holliday junction branch migration complex subunit RuvA (196 aa).

The interval 1–69 is domain I; sequence MIVGLRGTII…EDAHLLFGFC (69 aa). The segment at 70–148 is domain II; sequence EEIEKQTFER…QLLQSQEESI (79 aa). Positions 149-157 are flexible linker; sequence APSNNLKYE. Residues 157–196 form a domain III region; the sequence is EASLALQSLGFKRNEIQKVLEHIEALSVSEIVKEALKRLA.

Belongs to the RuvA family. Homotetramer. Forms an RuvA(8)-RuvB(12)-Holliday junction (HJ) complex. HJ DNA is sandwiched between 2 RuvA tetramers; dsDNA enters through RuvA and exits via RuvB. An RuvB hexamer assembles on each DNA strand where it exits the tetramer. Each RuvB hexamer is contacted by two RuvA subunits (via domain III) on 2 adjacent RuvB subunits; this complex drives branch migration. In the full resolvosome a probable DNA-RuvA(4)-RuvB(12)-RuvC(2) complex forms which resolves the HJ.

The protein localises to the cytoplasm. The RuvA-RuvB-RuvC complex processes Holliday junction (HJ) DNA during genetic recombination and DNA repair, while the RuvA-RuvB complex plays an important role in the rescue of blocked DNA replication forks via replication fork reversal (RFR). RuvA specifically binds to HJ cruciform DNA, conferring on it an open structure. The RuvB hexamer acts as an ATP-dependent pump, pulling dsDNA into and through the RuvAB complex. HJ branch migration allows RuvC to scan DNA until it finds its consensus sequence, where it cleaves and resolves the cruciform DNA. The polypeptide is Holliday junction branch migration complex subunit RuvA (Helicobacter hepaticus (strain ATCC 51449 / 3B1)).